Reading from the N-terminus, the 241-residue chain is Leucyl/phenylalanyl-tRNA--protein transferase (241 aa).

It belongs to the L/F-transferase family.

It is found in the cytoplasm. It catalyses the reaction N-terminal L-lysyl-[protein] + L-leucyl-tRNA(Leu) = N-terminal L-leucyl-L-lysyl-[protein] + tRNA(Leu) + H(+). It carries out the reaction N-terminal L-arginyl-[protein] + L-leucyl-tRNA(Leu) = N-terminal L-leucyl-L-arginyl-[protein] + tRNA(Leu) + H(+). The enzyme catalyses L-phenylalanyl-tRNA(Phe) + an N-terminal L-alpha-aminoacyl-[protein] = an N-terminal L-phenylalanyl-L-alpha-aminoacyl-[protein] + tRNA(Phe). Its function is as follows. Functions in the N-end rule pathway of protein degradation where it conjugates Leu, Phe and, less efficiently, Met from aminoacyl-tRNAs to the N-termini of proteins containing an N-terminal arginine or lysine. This Neisseria meningitidis serogroup C (strain 053442) protein is Leucyl/phenylalanyl-tRNA--protein transferase.